Here is a 232-residue protein sequence, read N- to C-terminus: Urease accessory protein UreF (232 aa).

The protein belongs to the UreF family. In terms of assembly, ureD, UreF and UreG form a complex that acts as a GTP-hydrolysis-dependent molecular chaperone, activating the urease apoprotein by helping to assemble the nickel containing metallocenter of UreC. The UreE protein probably delivers the nickel.

The protein localises to the cytoplasm. Its function is as follows. Required for maturation of urease via the functional incorporation of the urease nickel metallocenter. This Azorhizobium caulinodans (strain ATCC 43989 / DSM 5975 / JCM 20966 / LMG 6465 / NBRC 14845 / NCIMB 13405 / ORS 571) protein is Urease accessory protein UreF.